The chain runs to 369 residues: Molybdenum import ATP-binding protein ModC (369 aa).

The 244-residue stretch at 3–246 folds into the ABC transporter domain; it reads TRPEQASKDT…LDLPLAHGDS (244 aa). 44 to 51 is an ATP binding site; sequence GPSGSGKT. The 65-residue stretch at 305 to 369 folds into the Mop domain; it reads DTSILNILPA…AQIKGVAILG (65 aa).

Belongs to the ABC transporter superfamily. Molybdate importer (TC 3.A.1.8) family. In terms of assembly, the complex is composed of two ATP-binding proteins (ModC), two transmembrane proteins (ModB) and a solute-binding protein (ModA).

It is found in the cell inner membrane. The enzyme catalyses molybdate(out) + ATP + H2O = molybdate(in) + ADP + phosphate + H(+). Its function is as follows. Part of the ABC transporter complex ModABC involved in molybdenum import. Responsible for energy coupling to the transport system. The protein is Molybdenum import ATP-binding protein ModC of Albidiferax ferrireducens (strain ATCC BAA-621 / DSM 15236 / T118) (Rhodoferax ferrireducens).